The primary structure comprises 96 residues: Prokineticin Bv8-like peptide 2 (96 aa).

Residues 1–19 (MKCFAQIVVLLLVIAFSHG) form the signal peptide. Disulfide bonds link Cys-26–Cys-38, Cys-32–Cys-50, Cys-37–Cys-78, Cys-60–Cys-86, and Cys-80–Cys-95.

The protein belongs to the AVIT (prokineticin) family. As to expression, expressed by the skin glands.

The protein resides in the secreted. In terms of biological role, potent agonist for both PKR1/PROKR1 and PKR2/PROKR2, and inducer of a potent and long-lasting hyperalgesia. Also potentiates capsaicin-induced TRPV1 current when tested on DRG neurons. At subnanomolar concentrations, this protein both induces potent chemotaxis of macrophages and stimulates LPS-induced production of the pro-inflammatory cytokines IL-1 and IL-12. In vivo, potently stimulates the contraction of the guinea-pig gastrointestinal (GI) smooth muscle (nanomolar concentration) and rabbit aortic rings. The sequence is that of Prokineticin Bv8-like peptide 2 from Bombina maxima (Giant fire-bellied toad).